We begin with the raw amino-acid sequence, 140 residues long: Putative transcription elongation factor S-II-like protein 349L (140 aa).

The TFIIS-type zinc-finger motif lies at 100–139 (GAIKCKCGSERVFSFSKQTRSGDESTSVFALCSSCKSKWV). Zn(2+) contacts are provided by Cys-104, Cys-106, Cys-131, and Cys-134.

This sequence belongs to the IIV-6 349L family.

The chain is Putative transcription elongation factor S-II-like protein 349L from Acheta domesticus (House cricket).